The primary structure comprises 478 residues: MKAFLNEQFLLNSPTAEKLYHEFAKDLPIIDYHCHLSPKDIYENKTFRNITEAWLYGDHYKWRAMRANGIPETHVTGDASDYDKFLAWAKTVPMTIGNPLYHWTHLELRRYFEVQDLLNEKNADTIWQKVNEKLQEEGFGARDFIMKSNVETVVTTDDPIDSLQYHQKLREEGFSVQVLPGFRPDKALDIANDLFEKYVHELAEASAISIQSYQDFLNALRARIDFFHEHGCLISDHAINEMTYEETTQEEVETIFHKRMSGYPLTEKEKIKFKTETFIMLGQAYCERGWAMQLHINALRNNNTKMFERLGPDTGYDAMNDEDIAKPLCRILDRLEQEDALPNTILYSLNPRDNVVISTLAGSFQDGKTPGKMQHGTAWWFNDTKQGMTEQMMTLSSIGLISRFIGMLTDSRSFLSYTRHEYFRRLLCDIIGDWVEKGEVPYDLELLGEIVKGISYENAKQYFQFDRVKQLHHQSKIT.

Belongs to the metallo-dependent hydrolases superfamily. Uronate isomerase family.

It carries out the reaction D-glucuronate = D-fructuronate. The catalysed reaction is aldehydo-D-galacturonate = keto-D-tagaturonate. It participates in carbohydrate metabolism; pentose and glucuronate interconversion. The sequence is that of Uronate isomerase from Bacillus pumilus (strain SAFR-032).